Here is a 119-residue protein sequence, read N- to C-terminus: MSIGKNVARLRRAKSTRVHIRKLGVPRLSVLRTGRHLYAQIFTADGSKVIAAANTLQSQVKDGLKNGKNSLAATKVGKLIAERAKAVGVDRIAFDRSGYLYHGRIKILADAARDAGLKF.

It belongs to the universal ribosomal protein uL18 family. In terms of assembly, part of the 50S ribosomal subunit; part of the 5S rRNA/L5/L18/L25 subcomplex. Contacts the 5S and 23S rRNAs.

In terms of biological role, this is one of the proteins that bind and probably mediate the attachment of the 5S RNA into the large ribosomal subunit, where it forms part of the central protuberance. This chain is Large ribosomal subunit protein uL18, found in Xylella fastidiosa (strain 9a5c).